Here is a 273-residue protein sequence, read N- to C-terminus: Phosphate import ATP-binding protein PstB (273 aa).

The ABC transporter domain maps to 26 to 268 (MRGEKVCVFY…PTEKRTQDYI (243 aa)). 58-65 (GPSGCGKS) provides a ligand contact to ATP.

The protein belongs to the ABC transporter superfamily. Phosphate importer (TC 3.A.1.7) family. In terms of assembly, the complex is composed of two ATP-binding proteins (PstB), two transmembrane proteins (PstC and PstA) and a solute-binding protein (PstS).

The protein resides in the cell inner membrane. It catalyses the reaction phosphate(out) + ATP + H2O = ADP + 2 phosphate(in) + H(+). Its function is as follows. Part of the ABC transporter complex PstSACB involved in phosphate import. Responsible for energy coupling to the transport system. This is Phosphate import ATP-binding protein PstB from Brucella abortus (strain 2308).